Here is a 434-residue protein sequence, read N- to C-terminus: Arginine/serine-rich coiled-coil protein 2 (434 aa).

Over residues 1 to 27 the composition is skewed to basic and acidic residues; it reads MAASDTERDGLAPEKTSPDRDKKKEQS. Positions 1–230 are disordered; sequence MAASDTERDG…PSPPPFRGRN (230 aa). Ala-2 carries the N-acetylalanine modification. Ser-4 carries the phosphoserine modification. Phosphothreonine is present on residues Thr-6 and Thr-16. Ser-17, Ser-30, and Ser-32 each carry phosphoserine. Basic residues predominate over residues 35 to 51; it reads ASKHHYSRSRSRSRERK. Residues 66–111 show a composition bias toward basic and acidic residues; the sequence is RSKEGRRHESKDKSSKKHKSEEHNDKEHSSDKGRERLNSSENGEDR. Ser-104 is subject to Phosphoserine. Residues 112 to 214 are compositionally biased toward basic residues; that stretch reads HKRKERKSSR…KRIEKPRRFS (103 aa). The stretch at 230–270 forms a coiled coil; that stretch reads NTAMDAQEALARRLERAKKLQEQREKEMVEKQKQQEIAAAA. Residue Lys-375 forms a Glycyl lysine isopeptide (Lys-Gly) (interchain with G-Cter in SUMO1); alternate linkage. Lys-375 is covalently cross-linked (Glycyl lysine isopeptide (Lys-Gly) (interchain with G-Cter in SUMO2); alternate). A Phosphoserine modification is found at Ser-376.

Belongs to the RSRC2 family.

This Homo sapiens (Human) protein is Arginine/serine-rich coiled-coil protein 2 (RSRC2).